Reading from the N-terminus, the 354-residue chain is MIDWITSQGHAIFGGAWTPLWILIRAVLIVVPLLLCVAYLILWERKLIGWMHVRLGPNRVGPLGLLQPIADVLKLLLKEVMTPTHVSKGMYLIAPLMVLMPAVAIWAVIPFQAEVVMADVNAGLLYVMAISSVGVYGVILAGWASNSKYAFLGGMRAAAQMVSYEIAMGFALVTVLMVSGSLNLSAIVNSQNTGYFANMGINVLSWNWIPLLPMFGVYFISGVAETNRHPFDVVEGESEIVAGHMIEYSGMAFALFFLAEYINMIIISTITALLFLGGWAPPFSSFVTNAIPGFFWLLIKVFLLLSVFIWIRASFPRYRYDQIMRLGWKVFIPLTVGWLIIVAIWIKSPWNIWH.

Helical transmembrane passes span 22-42 (ILIR…YLIL), 91-111 (YLIA…VIPF), 124-144 (LLYV…AGWA), 168-188 (MGFA…SAIV), 203-223 (VLSW…ISGV), 255-275 (LFFL…ALLF), 291-311 (IPGF…FIWI), and 326-346 (LGWK…AIWI).

Belongs to the complex I subunit 1 family. In terms of assembly, NDH-1 is composed of 14 different subunits. Subunits NuoA, H, J, K, L, M, N constitute the membrane sector of the complex.

It is found in the cell inner membrane. The enzyme catalyses a quinone + NADH + 5 H(+)(in) = a quinol + NAD(+) + 4 H(+)(out). In terms of biological role, NDH-1 shuttles electrons from NADH, via FMN and iron-sulfur (Fe-S) centers, to quinones in the respiratory chain. The immediate electron acceptor for the enzyme in this species is believed to be ubiquinone. Couples the redox reaction to proton translocation (for every two electrons transferred, four hydrogen ions are translocated across the cytoplasmic membrane), and thus conserves the redox energy in a proton gradient. This subunit may bind ubiquinone. In Cupriavidus pinatubonensis (strain JMP 134 / LMG 1197) (Cupriavidus necator (strain JMP 134)), this protein is NADH-quinone oxidoreductase subunit H.